Reading from the N-terminus, the 255-residue chain is Acetylglutamate kinase (255 aa).

Substrate is bound by residues 40 to 41, R62, and N153; that span reads GG.

It belongs to the acetylglutamate kinase family. ArgB subfamily.

The protein localises to the cytoplasm. The enzyme catalyses N-acetyl-L-glutamate + ATP = N-acetyl-L-glutamyl 5-phosphate + ADP. It functions in the pathway amino-acid biosynthesis; L-arginine biosynthesis; N(2)-acetyl-L-ornithine from L-glutamate: step 2/4. Its function is as follows. Catalyzes the ATP-dependent phosphorylation of N-acetyl-L-glutamate. The protein is Acetylglutamate kinase of Bacillus cereus (strain ZK / E33L).